The chain runs to 277 residues: Indole-3-glycerol phosphate synthase (277 aa).

It belongs to the TrpC family.

It carries out the reaction 1-(2-carboxyphenylamino)-1-deoxy-D-ribulose 5-phosphate + H(+) = (1S,2R)-1-C-(indol-3-yl)glycerol 3-phosphate + CO2 + H2O. The protein operates within amino-acid biosynthesis; L-tryptophan biosynthesis; L-tryptophan from chorismate: step 4/5. The sequence is that of Indole-3-glycerol phosphate synthase from Pseudomonas putida (strain GB-1).